Reading from the N-terminus, the 102-residue chain is Large ribosomal subunit protein bL21 (102 aa).

The protein belongs to the bacterial ribosomal protein bL21 family. As to quaternary structure, part of the 50S ribosomal subunit. Contacts protein L20.

Functionally, this protein binds to 23S rRNA in the presence of protein L20. The polypeptide is Large ribosomal subunit protein bL21 (Ehrlichia ruminantium (strain Gardel)).